The primary structure comprises 272 residues: Cell division protein ZipA (272 aa).

Residues 1–4 (METH) lie on the Periplasmic side of the membrane. The chain crosses the membrane as a helical span at residues 5–25 (ILFFILAGLLIAVLIGYSIWS). Residues 26-272 (ARREKSRIFS…RQNYLLRVAN (247 aa)) are Cytoplasmic-facing.

It belongs to the ZipA family. Interacts with FtsZ via their C-terminal domains.

It localises to the cell inner membrane. Its function is as follows. Essential cell division protein that stabilizes the FtsZ protofilaments by cross-linking them and that serves as a cytoplasmic membrane anchor for the Z ring. Also required for the recruitment to the septal ring of downstream cell division proteins. The sequence is that of Cell division protein ZipA from Glaesserella parasuis serovar 5 (strain SH0165) (Haemophilus parasuis).